We begin with the raw amino-acid sequence, 412 residues long: NADH-quinone oxidoreductase subunit D (412 aa).

This sequence belongs to the complex I 49 kDa subunit family. In terms of assembly, NDH-1 is composed of at least 14 different subunits, Nqo1 to Nqo14. The complex has a L-shaped structure, with the hydrophobic arm (subunits Nqo7, Nqo8, Nqo10 to Nqo14) embedded in the inner membrane and the hydrophilic peripheral arm (subunits Nqo1 to Nqo6, Nqo9) protruding into the bacterial cytoplasm. The hydrophilic domain contains all the redox centers. NADH-quinone oxidoreductase forms a supercomplex with ubiquinol-cytochrome c reductase complex (complex III or cytochrome b-c1 complex) and cytochrome c oxidase (complex IV), which stabilizes the NADH-quinone oxidoreductase complex.

It is found in the cell inner membrane. The enzyme catalyses a quinone + NADH + 5 H(+)(in) = a quinol + NAD(+) + 4 H(+)(out). NDH-1 shuttles electrons from NADH, via FMN and iron-sulfur (Fe-S) centers, to quinones in the respiratory chain. The immediate electron acceptor for the enzyme in this species is believed to be ubiquinone. Couples the redox reaction to proton translocation (for every two electrons transferred, four hydrogen ions are translocated across the cytoplasmic membrane), and thus conserves the redox energy in a proton gradient. The protein is NADH-quinone oxidoreductase subunit D (nuoD) of Paracoccus denitrificans (strain Pd 1222).